We begin with the raw amino-acid sequence, 550 residues long: Hydroxylamine reductase (550 aa).

Cysteine 3, cysteine 6, cysteine 18, and cysteine 25 together coordinate [2Fe-2S] cluster. Hybrid [4Fe-2O-2S] cluster contacts are provided by histidine 249, glutamate 273, cysteine 317, cysteine 405, cysteine 433, cysteine 458, glutamate 492, and lysine 494. A Cysteine persulfide modification is found at cysteine 405.

The protein belongs to the HCP family. [2Fe-2S] cluster is required as a cofactor. Hybrid [4Fe-2O-2S] cluster serves as cofactor.

The protein resides in the cytoplasm. It catalyses the reaction A + NH4(+) + H2O = hydroxylamine + AH2 + H(+). Functionally, catalyzes the reduction of hydroxylamine to form NH(3) and H(2)O. The protein is Hydroxylamine reductase of Escherichia coli O7:K1 (strain IAI39 / ExPEC).